Consider the following 318-residue polypeptide: Probable plastid-lipid-associated protein 1, chloroplastic (318 aa).

The transit peptide at 1–55 (MATVPLFTQFPCKTLNPSSSNTKHQSKSPILLPINSINRRSEIGVSVHRPDFKIR) directs the protein to the chloroplast. Residue Thr-57 is modified to Phosphothreonine.

It belongs to the PAP/fibrillin family. In terms of assembly, interacts (via N-terminus) with ABI2. As to expression, expressed in flower buds. Detected in tapetal cells, endothecium and connective in anthers and in subepidermal cells in filaments.

It localises to the plastid. It is found in the chloroplast. The protein resides in the plastoglobule. Its subcellular location is the chloroplast thylakoid. Functionally, probably involved in light/cold stress-related jasmonate (JA) biosynthesis. Contributes to the protection of photosystem II (PSII) against light stress. This is Probable plastid-lipid-associated protein 1, chloroplastic (PAP1) from Arabidopsis thaliana (Mouse-ear cress).